We begin with the raw amino-acid sequence, 176 residues long: NAD(P)H-quinone oxidoreductase subunit 6, chloroplastic (176 aa).

The next 5 helical transmembrane spans lie at 10 to 30 (ILLV…VLLT), 32 to 52 (PIYS…FHIP), 61 to 81 (AQLL…VMFM), 92 to 112 (LWTV…FSLI), and 152 to 172 (FYLP…GAIS).

This sequence belongs to the complex I subunit 6 family. In terms of assembly, NDH is composed of at least 16 different subunits, 5 of which are encoded in the nucleus.

It localises to the plastid. The protein resides in the chloroplast thylakoid membrane. The enzyme catalyses a plastoquinone + NADH + (n+1) H(+)(in) = a plastoquinol + NAD(+) + n H(+)(out). It carries out the reaction a plastoquinone + NADPH + (n+1) H(+)(in) = a plastoquinol + NADP(+) + n H(+)(out). NDH shuttles electrons from NAD(P)H:plastoquinone, via FMN and iron-sulfur (Fe-S) centers, to quinones in the photosynthetic chain and possibly in a chloroplast respiratory chain. The immediate electron acceptor for the enzyme in this species is believed to be plastoquinone. Couples the redox reaction to proton translocation, and thus conserves the redox energy in a proton gradient. The polypeptide is NAD(P)H-quinone oxidoreductase subunit 6, chloroplastic (ndhG) (Liriodendron tulipifera (Tuliptree)).